Here is a 383-residue protein sequence, read N- to C-terminus: Protein delta homolog 1 (383 aa).

The first 23 residues, 1–23 (MTATEALLRVLLLLLAFGHSTYG), serve as a signal peptide directing secretion. EGF-like domains are found at residues 24–55 (AECFPACNPQNGFCEDDNVCRCQPGWQGPLCD), 53–86 (LCDQCVTSPGCLHGLCGEPGQCICTDGWDGELCD), 88–125 (DVRACSSAPCANNRTCVSLDDGLYECSCAPGYSGKDCQ), 127–168 (KDGP…NFCE), 170–206 (VANSCTPNPCENDGVCTDIGGDFRCRCPAGFIDKTCS), and 208–245 (PVTNCASSPCQNGGTCLQHTQVSYECLCKPEFTGLTCV). The Extracellular portion of the chain corresponds to 24–303 (AECFPACNPQ…KKTPLLTEGQ (280 aa)). 12 disulfide bridges follow: C26-C37, C30-C43, C45-C54, C57-C68, C63-C74, C76-C85, C92-C103, C97-C113, C115-C124, C131-C144, C138-C156, and C158-C167. O-linked (GalNAc...) serine glycosylation is present at S94. N-linked (GlcNAc...) asparagine glycosylation is present at N100. Residue T143 is glycosylated (O-linked (GalNAc...) threonine). S163 carries O-linked (GalNAc...) serine; partial glycosylation. Residues N165 and N172 are each glycosylated (N-linked (GlcNAc...) asparagine; atypical; partial). 6 disulfides stabilise this stretch: C174–C185, C179–C194, C196–C205, C212–C223, C217–C233, and C235–C244. S214 carries an O-linked (GalNAc...) serine glycan. The O-linked (GalNAc...) threonine; partial glycan is linked to T222. An O-linked (GalNAc...) serine; partial glycan is attached at S251. A glycan (O-linked (GalNAc...) threonine) is linked at T256. O-linked (GalNAc...) serine; partial glycosylation occurs at S260. Residues 304-327 (AICFTILGVLTSLVVLGTVGIVFL) traverse the membrane as a helical segment. Topologically, residues 328 to 383 (NKCETWVSNLRYNHMLRKKKNLLLQYNSGEDLAVNIIFPEKIDMTTFSKEAGDEEI) are cytoplasmic.

Monomer. Interacts with SH3RF2. Post-translationally, N- and O-glycosylated. O-glycosylated with core 1 or possibly core 8 glycans. In terms of tissue distribution, found within the stromal cells in close contact to the vascular structure of placental villi, yolk sac, fetal liver, adrenal cortex and pancreas and in the beta cells of the islets of Langerhans in the adult pancreas. Found also in some forms of neuroendocrine lung tumor tissue.

The protein resides in the membrane. The protein localises to the cytoplasm. Its function is as follows. May have a role in neuroendocrine differentiation. The polypeptide is Protein delta homolog 1 (DLK1) (Homo sapiens (Human)).